Reading from the N-terminus, the 344-residue chain is Biotin synthase (344 aa).

In terms of domain architecture, Radical SAM core spans 40–267; sequence AQVQVSTLLS…KSMVRLSAGR (228 aa). 3 residues coordinate [4Fe-4S] cluster: Cys-55, Cys-59, and Cys-62. Residues Cys-99, Cys-130, Cys-190, and Arg-262 each contribute to the [2Fe-2S] cluster site.

This sequence belongs to the radical SAM superfamily. Biotin synthase family. Homodimer. [4Fe-4S] cluster is required as a cofactor. The cofactor is [2Fe-2S] cluster.

The catalysed reaction is (4R,5S)-dethiobiotin + (sulfur carrier)-SH + 2 reduced [2Fe-2S]-[ferredoxin] + 2 S-adenosyl-L-methionine = (sulfur carrier)-H + biotin + 2 5'-deoxyadenosine + 2 L-methionine + 2 oxidized [2Fe-2S]-[ferredoxin]. It participates in cofactor biosynthesis; biotin biosynthesis; biotin from 7,8-diaminononanoate: step 2/2. Catalyzes the conversion of dethiobiotin (DTB) to biotin by the insertion of a sulfur atom into dethiobiotin via a radical-based mechanism. The protein is Biotin synthase of Xanthomonas euvesicatoria pv. vesicatoria (strain 85-10) (Xanthomonas campestris pv. vesicatoria).